The sequence spans 829 residues: Protein kintoun (829 aa).

4 disordered regions span residues 197–255 (VLRT…APTE), 349–377 (LPVA…DGAA), 400–465 (PSRT…SWGD), and 478–505 (RPTL…GGPG). The span at 352 to 371 (APTASRPEPAASPEEAADPP) shows a compositional bias: low complexity. Residues 416–430 (PGKERVAKSEERDFG) show a composition bias toward basic and acidic residues. The residue at position 450 (S450) is a Phosphoserine. Basic and acidic residues predominate over residues 484-497 (EARETREGTGREPA). S632 carries the phosphoserine modification. The interval 667-698 (NSEQLHEKEERVHEGSPLTEKENTEHATISTT) is disordered. Positions 670–691 (QLHEKEERVHEGSPLTEKENTE) are enriched in basic and acidic residues.

It belongs to the PIH1 family. Kintoun subfamily. As to quaternary structure, interacts with CFAP300. Interacts with DNAI2 and HSPA1A. Interacts with DNAAF4. Interacts with DNAAF6/PIH1D3.

The protein localises to the cytoplasm. Its subcellular location is the dynein axonemal particle. In terms of biological role, required for cytoplasmic pre-assembly of axonemal dyneins, thereby playing a central role in motility in cilia and flagella. Involved in pre-assembly of dynein arm complexes in the cytoplasm before intraflagellar transport loads them for the ciliary compartment. This Bos taurus (Bovine) protein is Protein kintoun.